A 500-amino-acid chain; its full sequence is Putative beta-glucosidase 5 (500 aa).

The first 20 residues, 1–20 (MEQFFALFTIFLSFAFPGRC), serve as a signal peptide directing secretion. Residues Gln-43, His-140, and 185-186 (NE) contribute to the a beta-D-glucoside site. Residue Glu-186 is the Proton donor of the active site. A disulfide bond links Cys-205 and Cys-212. Asn-216 carries an N-linked (GlcNAc...) asparagine glycan. Tyr-328 is a binding site for a beta-D-glucoside. An N-linked (GlcNAc...) asparagine glycan is attached at Asn-361. A beta-D-glucoside is bound at residue Glu-394. Glu-394 acts as the Nucleophile in catalysis. Residue Asn-424 is glycosylated (N-linked (GlcNAc...) asparagine). A beta-D-glucoside contacts are provided by Trp-434 and Tyr-450. Asn-456 and Asn-495 each carry an N-linked (GlcNAc...) asparagine glycan.

Belongs to the glycosyl hydrolase 1 family.

The catalysed reaction is Hydrolysis of terminal, non-reducing beta-D-glucosyl residues with release of beta-D-glucose.. In Arabidopsis thaliana (Mouse-ear cress), this protein is Putative beta-glucosidase 5.